A 320-amino-acid polypeptide reads, in one-letter code: Serpentine receptor class delta-28 (320 aa).

The next 7 helical transmembrane spans lie at 5–25 (LLHTVLSVVGVSLNAFMMYLA), 38–58 (AIITIKTFTDILTSAMSFFVM), 83–103 (ACYIGHMFMLCFLECNLIWMI), 122–142 (SLVFVAICLSIPSFIHMATWI), 176–196 (LTLIIQLFITSILVLIAYAWI), 230–250 (FLPSFIFLGVFVFVGMFTQLI), and 258–278 (LVSVIFMFSPICSPFSYILFV).

The protein belongs to the nematode receptor-like protein srd family.

The protein resides in the membrane. This Caenorhabditis elegans protein is Serpentine receptor class delta-28 (srd-28).